Reading from the N-terminus, the 505-residue chain is ATP synthase subunit alpha, chloroplastic (505 aa).

170–177 (GDRQTGKT) contacts ATP.

This sequence belongs to the ATPase alpha/beta chains family. In terms of assembly, F-type ATPases have 2 components, CF(1) - the catalytic core - and CF(0) - the membrane proton channel. CF(1) has five subunits: alpha(3), beta(3), gamma(1), delta(1), epsilon(1). CF(0) has four main subunits: a, b, b' and c.

The protein resides in the plastid. It is found in the chloroplast thylakoid membrane. It carries out the reaction ATP + H2O + 4 H(+)(in) = ADP + phosphate + 5 H(+)(out). Its function is as follows. Produces ATP from ADP in the presence of a proton gradient across the membrane. The alpha chain is a regulatory subunit. The sequence is that of ATP synthase subunit alpha, chloroplastic from Oenothera biennis (German evening primrose).